A 347-amino-acid chain; its full sequence is Core-capsid bridging protein (347 aa).

The segment at 290-320 (GYRGTTFQRRATAPSRRRGPSRRRRRRKATL) is disordered. Residues 304 to 318 (SRRRGPSRRRRRRKA) are compositionally biased toward basic residues.

This sequence belongs to the adenoviridae core-capsid bridging protein family. In terms of assembly, monomer. Homodimer. Exists in equilibrium between monomers and dimers in solution. Interacts with the histone-like nucleoprotein; this interactions bridge the virus core to the capsid. Interacts with core protein X; this interactions bridge the virus core to the capsid. Interacts with the endosome lysis protein VI; this interactions bridge the virus core to the capsid. Interacts with the peripentonal hexons. Interacts with host NPM1; this interaction might play a role in virus assembly.

It is found in the virion. The protein resides in the host nucleus. Its subcellular location is the host nucleolus. Its function is as follows. Associates loosely with the viral DNA to form an outer shell around the nucleoprotein-DNA complex and links it with the capsid by binding the endosome lysis protein. Dissociates from the viral genome during entry. Might be involved in nuclear capsid assembly of the viral particles through its association with NPM1/nucleophosmin. This is Core-capsid bridging protein from Homo sapiens (Human).